A 944-amino-acid chain; its full sequence is Lactoferrin-binding protein A (944 aa).

An N-terminal signal peptide occupies residues 1 to 27 (MNKKHGFSLTLTALAIAAAFPSYAANP). Residues 52–178 (RRSKEATGLG…LGGAVAFRTK (127 aa)) enclose the TBDR plug domain. In terms of domain architecture, TBDR beta-barrel spans 189-944 (SWGIQAKTAY…NFSLALEMKF (756 aa)). A TonB C-terminal box motif is present at residues 927 to 944 (GRYAAPGRNFSLALEMKF).

This sequence belongs to the TonB-dependent receptor family.

It localises to the cell outer membrane. Functionally, unknown. May be an iron-siderophore receptor. This is Lactoferrin-binding protein A (lbpA) from Neisseria meningitidis serogroup A / serotype 4A (strain DSM 15465 / Z2491).